The sequence spans 242 residues: MSDLTVVKGLQSEIYVPITPPPVWTPVTKELKDMTVALVTAAGVHMKADKRFNLAGDFSFRVIPGDASVNDMMVSHGGYDNGDVNKDINCMFPIDPMRTLAKEGFIKALAPINIGFMGGGGDQKKFSEETGPEIARQLKEEGVDAVLLTAGUGTCHRSAVIVQRAIEESGIPTIIIAALPPVVRQNGTPRAVAPLVPMGANAGEPNNPEMQKAICTDSLKQLVEIPSAGKIVPLPYEYVAKV.

Residue Sec152 is the Nucleophile of the active site. Sec152 is a non-standard amino acid (selenocysteine).

As to quaternary structure, consists of 3 subunits of 23, 26 and 45 kDa (alpha, gamma and beta respectively). The molecular weight of the complex is approximately 870 kDa, suggesting a decameric structure, if all 3 subunits are present in equal stoichiometry. Post-translationally, this subunit is carbonylated in vitro on an unidentified residue.

The protein localises to the cytoplasm. It catalyses the reaction [PrdC protein]-Se-L-selenocysteinyl-S-L-cysteine + 5-aminopentanoate = [PrdC protein]-L-selenocysteine/L-cysteine + D-proline. D-proline reductase catalyzes the reductive cleavage of a C-N bond in D-proline resulting in the formation of 5-aminovalerate. The alpha subunit has been shown to bind D-proline, presumably via the pyruvoyl group. This Acetoanaerobium sticklandii (strain ATCC 12662 / DSM 519 / JCM 1433 / CCUG 9281 / NCIMB 10654 / HF) (Clostridium sticklandii) protein is D-proline reductase subunit gamma (prdB).